The following is a 232-amino-acid chain: 2,3,4,5-tetrahydropyridine-2,6-dicarboxylate N-acetyltransferase (232 aa).

This sequence belongs to the transferase hexapeptide repeat family. DapH subfamily.

It catalyses the reaction (S)-2,3,4,5-tetrahydrodipicolinate + acetyl-CoA + H2O = L-2-acetamido-6-oxoheptanedioate + CoA. It functions in the pathway amino-acid biosynthesis; L-lysine biosynthesis via DAP pathway; LL-2,6-diaminopimelate from (S)-tetrahydrodipicolinate (acetylase route): step 1/3. In terms of biological role, catalyzes the transfer of an acetyl group from acetyl-CoA to tetrahydrodipicolinate. The chain is 2,3,4,5-tetrahydropyridine-2,6-dicarboxylate N-acetyltransferase from Streptococcus mutans serotype c (strain ATCC 700610 / UA159).